A 403-amino-acid polypeptide reads, in one-letter code: Acetylornithine aminotransferase (403 aa).

Pyridoxal 5'-phosphate is bound by residues 107 to 108 (GA) and Phe140. Residue Arg143 coordinates N(2)-acetyl-L-ornithine. A pyridoxal 5'-phosphate-binding site is contributed by 225 to 228 (DEVQ). Residue Lys254 is modified to N6-(pyridoxal phosphate)lysine. Ser282 contributes to the N(2)-acetyl-L-ornithine binding site. Thr283 contacts pyridoxal 5'-phosphate.

The protein belongs to the class-III pyridoxal-phosphate-dependent aminotransferase family. ArgD subfamily. In terms of assembly, homodimer. Pyridoxal 5'-phosphate is required as a cofactor.

Its subcellular location is the cytoplasm. The catalysed reaction is N(2)-acetyl-L-ornithine + 2-oxoglutarate = N-acetyl-L-glutamate 5-semialdehyde + L-glutamate. Its pathway is amino-acid biosynthesis; L-arginine biosynthesis; N(2)-acetyl-L-ornithine from L-glutamate: step 4/4. This chain is Acetylornithine aminotransferase, found in Vibrio parahaemolyticus serotype O3:K6 (strain RIMD 2210633).